The following is a 210-amino-acid chain: Fibrillarin-like rRNA/tRNA 2'-O-methyltransferase (210 aa).

The disordered stretch occupies residues 1–34; that stretch reads MTLPSGVERHDFGGETSLATQGQPVYGERTDGDW. Residues 71 to 72, 87 to 88, 112 to 113, and 132 to 135 contribute to the S-adenosyl-L-methionine site; these read TT, EF, DA, and DVAT.

Belongs to the methyltransferase superfamily. Fibrillarin family. Interacts with nop5. Component of box C/D small ribonucleoprotein (sRNP) particles that contain rpl7ae, FlpA and nop5, plus a guide RNA.

Involved in pre-rRNA and tRNA processing. Utilizes the methyl donor S-adenosyl-L-methionine to catalyze the site-specific 2'-hydroxyl methylation of ribose moieties in rRNA and tRNA. Site specificity is provided by a guide RNA that base pairs with the substrate. Methylation occurs at a characteristic distance from the sequence involved in base pairing with the guide RNA. The polypeptide is Fibrillarin-like rRNA/tRNA 2'-O-methyltransferase (Haloarcula marismortui (strain ATCC 43049 / DSM 3752 / JCM 8966 / VKM B-1809) (Halobacterium marismortui)).